We begin with the raw amino-acid sequence, 909 residues long: Phosphoenolpyruvate carboxylase (909 aa).

Active-site residues include histidine 151 and lysine 578.

This sequence belongs to the PEPCase type 1 family. It depends on Mg(2+) as a cofactor.

The enzyme catalyses oxaloacetate + phosphate = phosphoenolpyruvate + hydrogencarbonate. Forms oxaloacetate, a four-carbon dicarboxylic acid source for the tricarboxylic acid cycle. The protein is Phosphoenolpyruvate carboxylase of Caulobacter vibrioides (strain ATCC 19089 / CIP 103742 / CB 15) (Caulobacter crescentus).